The following is a 916-amino-acid chain: Translation initiation factor IF-2 (916 aa).

Residues 151–191 (NLDEQQRLAESDRARDEAIQRKRDEEQAAKDRVEAERKAAE) are compositionally biased toward basic and acidic residues. Disordered stretches follow at residues 151 to 262 (NLDE…SHVM) and 280 to 328 (HLSA…ERPT). 2 stretches are compositionally biased toward low complexity: residues 192 to 243 (EAAA…ATPA) and 293 to 305 (RGKP…SSSS). In terms of domain architecture, tr-type G spans 415–584 (SRPPVVTIMG…SLQAEVLELK (170 aa)). Positions 424–431 (GHVDHGKT) are G1. 424 to 431 (GHVDHGKT) contributes to the GTP binding site. The G2 stretch occupies residues 449-453 (GITQH). Residues 470–473 (DTPG) are G3. Residues 470 to 474 (DTPGH) and 524 to 527 (NKID) contribute to the GTP site. Residues 524–527 (NKID) are G4. The tract at residues 560–562 (SAK) is G5.

Belongs to the TRAFAC class translation factor GTPase superfamily. Classic translation factor GTPase family. IF-2 subfamily.

The protein resides in the cytoplasm. Functionally, one of the essential components for the initiation of protein synthesis. Protects formylmethionyl-tRNA from spontaneous hydrolysis and promotes its binding to the 30S ribosomal subunits. Also involved in the hydrolysis of GTP during the formation of the 70S ribosomal complex. The chain is Translation initiation factor IF-2 from Xanthomonas campestris pv. campestris (strain B100).